The primary structure comprises 1500 residues: Host cell factor (1500 aa).

5 Kelch repeats span residues 85–133, 135–181, 189–237, 259–307, and 308–373; these read LMVV…VEGT, MFVF…RLGH, KIFL…TYGD, NLLI…MIGN, and KMYV…GIQS. The residue at position 477 (S477) is a Phosphoserine. Residues 517–528 show a composition bias toward polar residues; the sequence is LLQSMSQPSSPA. Residues 517 to 543 form a disordered region; the sequence is LLQSMSQPSSPASRADKDPLSSGGGTT. Phosphoserine is present on residues S958 and S966. The tract at residues 1024-1061 is disordered; sequence SEGQHGSEENENNGENATSSSASALFTGGDTAGPSRAQ. Low complexity predominate over residues 1036-1047; that stretch reads NGENATSSSASA. Position 1126 is a phosphothreonine (T1126). The interval 1161-1185 is disordered; it reads IGSLKENQDENKKFKQRQESSPSQN. A compositionally biased stretch (basic and acidic residues) spans 1166 to 1178; the sequence is ENQDENKKFKQRQ. Fibronectin type-III domains lie at 1244–1341 and 1346–1457; these read VQST…TCLP and APSA…DPAA. The segment at 1458 to 1500 is disordered; it reads AKQHTPTVTPNLKRGPEKSTIGSSNIANTFCSPHKRGRNGLHD. The short motif at 1470–1495 is the Bipartite nuclear localization signal element; that stretch reads KRGPEKSTIGSSNIANTFCSPHKRGR. The span at 1477–1488 shows a compositional bias: polar residues; the sequence is TIGSSNIANTFC. S1489 carries the phosphoserine modification. A compositionally biased stretch (basic residues) spans 1490–1500; that stretch reads PHKRGRNGLHD.

Core component of several methyltransferase-containing complexes. Component of the SET1 complex, composed at least of the catalytic subunit Set1, wds/WDR5, Wdr82, Rbbp5, ash2, Cfp1/CXXC1, hcf and Dpy-30L1. Component of the MLL3/4 complex composed at least of the catalytic subunit trr, ash2, Rbbp5, Dpy-30L1, wds, hcf, ptip, Pa1, Utx, Lpt and Ncoa6. Component of the Ada2a-containing (ATAC) complex composed of at least Ada2a, Atac1, Hcf, Ada3, Gcn5, Mocs2B, Charac-14, Atac3, Atac2, NC2beta and wds. In terms of processing, proteolytic cleavage occurs between amino acids 900 and 1100 within the non-conserved central region, giving rise to two independent but tightly associated N- and C-terminal subunits.

It is found in the nucleus. Functionally, may be involved in control of the cell cycle. This Drosophila melanogaster (Fruit fly) protein is Host cell factor.